Here is a 251-residue protein sequence, read N- to C-terminus: MNILITNDDGINARGIKTLAEKMSKKHNVTIVAPREQKSASSHSISINIPIKIREEKIDGLDCKAYSLVGTPADCTQAGISLLVKDIDLVISGINRGFNSGTDILYSGTVSAAIEGAIYDVPSIAISMDVKWDRDDEDYSKAANWVNKVVDLAEKKYLKKNVVLNVNVPNINEEDIKGLKVCKIGKSTYKTEYVLLEEDNDKVYQTRGVRNQVEKDESDLYFLSQGYVTLTPLHFDFTNFKELNEVKKIFE.

The a divalent metal cation site is built by Asp8, Asp9, Ser39, and Asn95.

Belongs to the SurE nucleotidase family. It depends on a divalent metal cation as a cofactor.

The protein resides in the cytoplasm. The enzyme catalyses a ribonucleoside 5'-phosphate + H2O = a ribonucleoside + phosphate. Functionally, nucleotidase that shows phosphatase activity on nucleoside 5'-monophosphates. The polypeptide is 5'-nucleotidase SurE (Clostridium botulinum (strain Alaska E43 / Type E3)).